The following is a 439-amino-acid chain: GTPase Obg (439 aa).

The Obg domain maps to 1 to 159; sequence MAFVDQAQIE…RNLKLELKVL (159 aa). Residues 160–336 form the OBG-type G domain; it reads ADVGLVGFPS…LMRLTADMLA (177 aa). GTP is bound by residues 166 to 173, 191 to 195, 213 to 216, 283 to 286, and 317 to 319; these read GFPSAGKS, FTTLS, DLPG, TKMD, and SSI. Mg(2+) contacts are provided by Ser173 and Thr193. A disordered region spans residues 338–357; it reads APAPESYRPETKNDTSEKSY. Basic and acidic residues predominate over residues 344–354; sequence YRPETKNDTSE. The OCT domain occupies 358–439; that stretch reads TFKPETHDFT…NSDFVFEFSE (82 aa).

It belongs to the TRAFAC class OBG-HflX-like GTPase superfamily. OBG GTPase family. Monomer. Mg(2+) is required as a cofactor.

It is found in the cytoplasm. An essential GTPase which binds GTP, GDP and possibly (p)ppGpp with moderate affinity, with high nucleotide exchange rates and a fairly low GTP hydrolysis rate. Plays a role in control of the cell cycle, stress response, ribosome biogenesis and in those bacteria that undergo differentiation, in morphogenesis control. This is GTPase Obg from Leuconostoc mesenteroides subsp. mesenteroides (strain ATCC 8293 / DSM 20343 / BCRC 11652 / CCM 1803 / JCM 6124 / NCDO 523 / NBRC 100496 / NCIMB 8023 / NCTC 12954 / NRRL B-1118 / 37Y).